The primary structure comprises 518 residues: Probable carboxypeptidase 2 (518 aa).

A signal peptide spans 1-21 (MVAYHLLTLISLGLGSHCASA). N-linked (GlcNAc...) asparagine glycosylation is present at Asn-46. The interval 53-76 (PAFTSPGTVPRGFSDGTSGPTRDE) is disordered. The 281-residue stretch at 71–351 (GPTRDETMEG…VMAKSILQTA (281 aa)) folds into the Peptidase M14 domain. The N-linked (GlcNAc...) asparagine glycan is linked to Asn-116. Positions 136, 139, and 224 each coordinate Zn(2+). Glu-322 serves as the catalytic Proton donor/acceptor. 2 N-linked (GlcNAc...) asparagine glycosylation sites follow: Asn-393 and Asn-459.

Belongs to the peptidase M14 family. Zn(2+) serves as cofactor.

It localises to the secreted. Its function is as follows. Extracellular metalloprotease that contributes to pathogenicity. The polypeptide is Probable carboxypeptidase 2 (MCPB) (Trichophyton verrucosum (strain HKI 0517)).